A 229-amino-acid polypeptide reads, in one-letter code: Protein-L-isoaspartate O-methyltransferase (229 aa).

Residue serine 78 is part of the active site.

It belongs to the methyltransferase superfamily. L-isoaspartyl/D-aspartyl protein methyltransferase family.

It is found in the cytoplasm. The catalysed reaction is [protein]-L-isoaspartate + S-adenosyl-L-methionine = [protein]-L-isoaspartate alpha-methyl ester + S-adenosyl-L-homocysteine. Functionally, catalyzes the methyl esterification of L-isoaspartyl residues in peptides and proteins that result from spontaneous decomposition of normal L-aspartyl and L-asparaginyl residues. It plays a role in the repair and/or degradation of damaged proteins. This Chromohalobacter salexigens (strain ATCC BAA-138 / DSM 3043 / CIP 106854 / NCIMB 13768 / 1H11) protein is Protein-L-isoaspartate O-methyltransferase.